A 396-amino-acid chain; its full sequence is Elongation factor Tu (396 aa).

One can recognise a tr-type G domain in the interval 10-205 (KTHANIGTIG…AVDDYIPTPE (196 aa)). Residues 19 to 26 (GHVDHGKT) are G1. 19-26 (GHVDHGKT) contacts GTP. T26 lines the Mg(2+) pocket. A G2 region spans residues 61–65 (GITIS). Positions 82 to 85 (DCPG) are G3. GTP contacts are provided by residues 82–86 (DCPGH) and 137–140 (NKCD). The segment at 137-140 (NKCD) is G4. Residues 175 to 177 (SAL) form a G5 region.

It belongs to the TRAFAC class translation factor GTPase superfamily. Classic translation factor GTPase family. EF-Tu/EF-1A subfamily. As to quaternary structure, monomer.

It is found in the cytoplasm. It catalyses the reaction GTP + H2O = GDP + phosphate + H(+). Functionally, GTP hydrolase that promotes the GTP-dependent binding of aminoacyl-tRNA to the A-site of ribosomes during protein biosynthesis. This is Elongation factor Tu from Halalkalibacterium halodurans (strain ATCC BAA-125 / DSM 18197 / FERM 7344 / JCM 9153 / C-125) (Bacillus halodurans).